The chain runs to 635 residues: Threonine--tRNA ligase (635 aa).

The 61-residue stretch at Met1–Thr61 folds into the TGS domain. Residues Asp242–Pro533 are catalytic. Zn(2+) is bound by residues Cys333, His384, and His510.

Belongs to the class-II aminoacyl-tRNA synthetase family. As to quaternary structure, homodimer. Requires Zn(2+) as cofactor.

It is found in the cytoplasm. It catalyses the reaction tRNA(Thr) + L-threonine + ATP = L-threonyl-tRNA(Thr) + AMP + diphosphate + H(+). Functionally, catalyzes the attachment of threonine to tRNA(Thr) in a two-step reaction: L-threonine is first activated by ATP to form Thr-AMP and then transferred to the acceptor end of tRNA(Thr). Also edits incorrectly charged L-seryl-tRNA(Thr). This chain is Threonine--tRNA ligase, found in Methylibium petroleiphilum (strain ATCC BAA-1232 / LMG 22953 / PM1).